The primary structure comprises 183 residues: Ferredoxin-2, mitochondrial (183 aa).

The transit peptide at 1–52 directs the protein to the mitochondrion; that stretch reads MAASMARGGVSARVLLQAARGTWWNRPGGTSGSGEGVALGTTRKFQATGSRP. Residues 45–65 form a disordered region; the sequence is FQATGSRPAGEEDAGGPERPG. In terms of domain architecture, 2Fe-2S ferredoxin-type spans 68 to 170; sequence VNVVFVDRSG…GAEFTLPKIT (103 aa). [2Fe-2S] cluster-binding residues include cysteine 105, cysteine 111, cysteine 114, and cysteine 151.

It belongs to the adrenodoxin/putidaredoxin family. Component of the mitochondrial core iron-sulfur cluster (ISC) complex composed of NFS1, LYRM4, NDUFAB1, ISCU, FXN, and FDX2; this complex is a heterohexamer containing two copies of each monomer. Form a heterodimer complex with NFS1. Interacts (in both their reduced and oxidized states) with the cysteine desulfurase complex; this interaction stimulates cysteine desulfurase activity, and serves as a reductant for Fe-S cluster assembly. Requires [2Fe-2S] cluster as cofactor. In terms of tissue distribution, widely expressed, with highest levels in testis, kidney and brain (at protein level). Expressed in muscle (at protein level). Expressed in fibroblasts (at protein level).

It is found in the mitochondrion. The protein localises to the mitochondrion matrix. In terms of biological role, electron donor, of the core iron-sulfur cluster (ISC) assembly complex, that acts to reduce the persulfide into sulfide during [2Fe-2S] clusters assembly on the scaffolding protein ISCU. The core iron-sulfur cluster (ISC) assembly complex is involved in the de novo synthesis of a [2Fe-2S] cluster, the first step of the mitochondrial iron-sulfur protein biogenesis. This process is initiated by the cysteine desulfurase complex (NFS1:LYRM4:NDUFAB1) that produces persulfide which is delivered on the scaffold protein ISCU in a FXN-dependent manner. Then this complex is stabilized by FDX2 which provides reducing equivalents to accomplish the [2Fe-2S] cluster assembly. Finally, the [2Fe-2S] cluster is transferred from ISCU to chaperone proteins, including HSCB, HSPA9 and GLRX5. Essential for coenzyme Q biosynthesis: together with FDXR, transfers the electrons required for the hydroxylation reaction performed by COQ6. This is Ferredoxin-2, mitochondrial from Homo sapiens (Human).